Reading from the N-terminus, the 915-residue chain is Copper-exporting P-type ATPase (915 aa).

2 consecutive HMA domains span residues Asn-11–Gly-72 and Thr-73–Ile-134. The Cu(+) site is built by Cys-22, Cys-25, Cys-84, and Cys-87. The disordered stretch occupies residues Phe-142–Ala-169. The segment covering Ala-158 to Ala-169 has biased composition (polar residues). In terms of domain architecture, HMA 3 spans Gln-172–Glu-236. The Cu(+) site is built by Cys-183 and Cys-186. 7 consecutive transmembrane segments (helical) span residues Leu-265–Ile-285, Val-293–Phe-313, Thr-329–Pro-349, Val-359–Thr-379, Leu-474–Val-494, Val-514–Gly-534, and Tyr-541–Ala-561. The active-site 4-aspartylphosphate intermediate is the Asp-598. 2 residues coordinate Mg(2+): Asp-796 and Asp-800. Transmembrane regions (helical) follow at residues Ala-801–Ile-821 and Ile-865–Ala-885.

Belongs to the cation transport ATPase (P-type) (TC 3.A.3) family. Type IB subfamily.

Its subcellular location is the cell membrane. The enzyme catalyses Cu(+)(in) + ATP + H2O = Cu(+)(out) + ADP + phosphate + H(+). Functionally, involved in copper export. The protein is Copper-exporting P-type ATPase (copA) of Vibrio cholerae serotype O1 (strain ATCC 39315 / El Tor Inaba N16961).